Reading from the N-terminus, the 426-residue chain is Hemojuvelin (426 aa).

The signal sequence occupies residues 1-35; the sequence is MGEPGQSPSPRSSHGSPPTLSTLTLLLLLCGHAHS. Tyr-46 is subject to Phosphotyrosine. Asn-118 carries N-linked (GlcNAc...) asparagine glycosylation. The tract at residues 119 to 142 is disordered; that stretch reads CSRQGPTAPPPPRGPALPGAGSGL. Disulfide bonds link Cys-148/Cys-230 and Cys-167/Cys-317. Asn-213 and Asn-372 each carry an N-linked (GlcNAc...) asparagine glycan. A lipid anchor (GPI-anchor amidated aspartate) is attached at Asp-400. Positions 401–426 are cleaved as a propeptide — removed in mature form; sequence AGVPLSSATLLAPLLSGLFVLWLCIQ.

The protein belongs to the repulsive guidance molecule (RGM) family. In terms of assembly, interacts with BMP2 and BMP4. Interacts with BMP6. Interacts with BMPR1B. Interacts with TMPRSS6. Post-translationally, autocatalytically cleaved at low pH; the two chains remain linked via two disulfide bonds. Also proteolytically processed by TMPRSS6, several fragments being released in the extracellular space; regulates HJV activity in BMP signaling and thefore iron homeostasis. In terms of tissue distribution, adult and fetal liver, heart, and skeletal muscle.

The protein localises to the cell membrane. Its function is as follows. Acts as a bone morphogenetic protein (BMP) coreceptor. Through enhancement of BMP signaling regulates hepcidin (HAMP) expression and regulates iron homeostasis. This chain is Hemojuvelin, found in Homo sapiens (Human).